The primary structure comprises 110 residues: Ribonuclease H2 subunit C (110 aa).

The tract at residues 45 to 69 (LKREKSATPSSSDNTTSNTFSNGAI) is disordered. Residues 51 to 66 (ATPSSSDNTTSNTFSN) show a composition bias toward low complexity.

Belongs to the RNase H2 subunit C family. Highly divergent. In terms of assembly, the RNase 2 complex is a heterotrimer composed of the catalytic subunit RNH201 and of the non-catalytic subunits RNH202 and RNH203.

It localises to the cytoplasm. The protein resides in the nucleus. Its function is as follows. Non catalytic subunit of RNase H2, an endonuclease that specifically degrades the RNA of RNA:DNA hybrids. Participates in DNA replication, possibly by mediating the removal of lagging-strand Okazaki fragment RNA primers during DNA replication. Mediates the excision of single ribonucleotides from DNA:RNA duplexes. The protein is Ribonuclease H2 subunit C (RNH203) of Saccharomyces cerevisiae (strain ATCC 204508 / S288c) (Baker's yeast).